The primary structure comprises 1521 residues: Suppressor of Ty 6 homolog (1521 aa).

Residues 1–204 (MDFIDNQAEE…EGAEDDARDV (204 aa)) form a disordered region. Residues 26–41 (KKMKMAKDKLKKKKKV) show a composition bias toward basic residues. A Nuclear localization signal motif is present at residues 26 to 42 (KKMKMAKDKLKKKKKVV). 2 stretches are compositionally biased toward acidic residues: residues 45 to 56 (SDEDEDDEDDEE) and 67 to 76 (ADEDDEEEDA). Basic and acidic residues predominate over residues 77–89 (RSEKSDRSRRSEI). A compositionally biased stretch (acidic residues) spans 90–103 (NDELDDEDLDLIDE). Basic and acidic residues predominate over residues 127 to 149 (PIRRSNQDDDDLQSERGSDDGDK). Residues 167–177 (RSEDDFIEDDG) show a composition bias toward acidic residues. Residues 1182–1251 (LNAGRPGGCV…EKFSILLSCK (70 aa)) enclose the S1 motif domain. The SH2 domain occupies 1299-1388 (HPNFHNVSYE…IARFVLPMIQ (90 aa)). Residues 1490 to 1521 (GIRSSLSYRPTGRTGPPPSAPYQQPPQQQYYR) are disordered. The segment covering 1504 to 1513 (GPPPSAPYQQ) has biased composition (pro residues).

The protein belongs to the SPT6 family. In terms of assembly, interacts with glp-1 and lin-12.

It is found in the nucleus. In terms of biological role, histone H3-H4 chaperone that plays a role in maintenance of chromatin structure during RNA polymerase II transcription elongation. May be required for several aspects of morphogenesis of C.briggsae, including regulation of division in the germline and gut and specification of ventral-uterine precursor cell fate. This chain is Suppressor of Ty 6 homolog (emb-5), found in Caenorhabditis briggsae.